The chain runs to 131 residues: Arsenate reductase 2 (131 aa).

Residues cysteine 10, cysteine 82, and cysteine 89 each act as nucleophile in the active site. 2 cysteine pairs are disulfide-bonded: cysteine 10/cysteine 82 and cysteine 82/cysteine 89.

The protein belongs to the low molecular weight phosphotyrosine protein phosphatase family. Thioredoxin-coupled ArsC subfamily.

The protein localises to the cytoplasm. The enzyme catalyses arsenate + [thioredoxin]-dithiol + H(+) = arsenite + [thioredoxin]-disulfide + H2O. Functionally, catalyzes the reduction of arsenate [As(V)] to arsenite [As(III)]. In Staphylococcus saprophyticus subsp. saprophyticus (strain ATCC 15305 / DSM 20229 / NCIMB 8711 / NCTC 7292 / S-41), this protein is Arsenate reductase 2.